Here is a 405-residue protein sequence, read N- to C-terminus: Tryptophan synthase beta chain (405 aa).

The residue at position 95 (Lys95) is an N6-(pyridoxal phosphate)lysine.

This sequence belongs to the TrpB family. In terms of assembly, tetramer of two alpha and two beta chains. The cofactor is pyridoxal 5'-phosphate.

The catalysed reaction is (1S,2R)-1-C-(indol-3-yl)glycerol 3-phosphate + L-serine = D-glyceraldehyde 3-phosphate + L-tryptophan + H2O. The protein operates within amino-acid biosynthesis; L-tryptophan biosynthesis; L-tryptophan from chorismate: step 5/5. The beta subunit is responsible for the synthesis of L-tryptophan from indole and L-serine. This chain is Tryptophan synthase beta chain, found in Pseudomonas putida (strain W619).